The following is a 530-amino-acid chain: Probable phosphoacetylglucosamine mutase (530 aa).

S62 (phosphoserine intermediate) is an active-site residue. The Mg(2+) site is built by S62, D278, D280, and D282. Substrate contacts are provided by residues 369–371 (EPN), 481–485 (RPSGT), and R490.

The protein belongs to the phosphohexose mutase family. It depends on Mg(2+) as a cofactor.

The catalysed reaction is N-acetyl-alpha-D-glucosamine 1-phosphate = N-acetyl-D-glucosamine 6-phosphate. Its pathway is nucleotide-sugar biosynthesis; UDP-N-acetyl-alpha-D-glucosamine biosynthesis; N-acetyl-alpha-D-glucosamine 1-phosphate from alpha-D-glucosamine 6-phosphate (route I): step 2/2. Its function is as follows. Catalyzes the conversion of GlcNAc-6-P into GlcNAc-1-P during the synthesis of uridine diphosphate/UDP-GlcNAc, which is a biosynthetic precursor of chitin and also supplies the amino sugars for N-linked oligosaccharides of glycoproteins. In Encephalitozoon cuniculi (strain GB-M1) (Microsporidian parasite), this protein is Probable phosphoacetylglucosamine mutase.